A 1081-amino-acid chain; its full sequence is Probable cellulose synthase A catalytic subunit 8 [UDP-forming] (1081 aa).

The Cytoplasmic segment spans residues 1–277 (MDGDADAVKS…PSSRINPYRM (277 aa)). 8 residues coordinate Zn(2+): Cys19, Cys22, Cys38, Cys41, Cys46, Cys49, Cys61, and Cys64. The segment at 19-65 (CQICGDGVGTTAEGDVFAACDVCGFPVCRPCYEYERKDGTQACPQCK) adopts an RING-type; degenerate zinc-finger fold. The disordered stretch occupies residues 72 to 148 (KGSPAIRGEE…YDSGEIPRGY (77 aa)). Residues 81–91 (EGEDTDADDVS) are compositionally biased toward acidic residues. Positions 103–112 (QKQKIADRMR) are enriched in basic and acidic residues. The chain crosses the membrane as a helical span at residues 278–298 (VIVLRLVVLSIFLHYRITNPV). Residues 299-300 (RN) lie on the Extracellular side of the membrane. Residues 301–321 (AYPLWLLSVICEIWFALSWIL) form a helical membrane-spanning segment. Over 322 to 864 (DQFPKWFPIN…INTTIYPLTS (543 aa)) the chain is Cytoplasmic. Residues Ser360, Lys366, Glu367, and Asp396 each contribute to the UDP-alpha-D-glucose site. Asp396 is a catalytic residue. A coiled-coil region spans residues 450 to 477 (VKDRRAMKREYEEFKVRINGLVAKAQKV). Position 537 (Lys537) interacts with UDP-alpha-D-glucose. Mn(2+) contacts are provided by Lys538 and Asp562. The interval 660 to 684 (SLCGGRKKASKSKKKSSDKKKSNKH) is disordered. Positions 664 to 682 (GRKKASKSKKKSSDKKKSN) are enriched in basic residues. The active site involves Asp781. The helical transmembrane segment at 865–885 (IPLLIYCVLPAICLLTGKFII) threads the bilayer. Residues 886-890 (PEISN) lie on the Extracellular side of the membrane. A helical membrane pass occupies residues 891 to 911 (FASIWFISLFISIFATGILEM). At 912–926 (RWSGVGIDEWWRNEQ) the chain is on the cytoplasmic side. The helical transmembrane segment at 927-947 (FWVIGGISAHLFAVFQGLLKV) threads the bilayer. The Extracellular segment spans residues 948–977 (LAGIDTNFTVTSKASDEDGDFAELYMFKWT). An N-linked (GlcNAc...) asparagine glycan is attached at Asn954. Residues 978–998 (TLLIPPTTILIINLVGVVAGI) form a helical membrane-spanning segment. Residues 999–1009 (SYAINSGYQSW) are Cytoplasmic-facing. The chain crosses the membrane as a helical span at residues 1010–1030 (GPLFGKLFFAFWVIVHLYPFL). Residues 1031 to 1039 (KGLMGRQNR) lie on the Extracellular side of the membrane. Residues 1040-1060 (TPTIVVVWAILLASIFSLLWV) traverse the membrane as a helical segment. At 1061–1081 (RIDPFTTRVTGPDTQTCGINC) the chain is on the cytoplasmic side.

It belongs to the glycosyltransferase 2 family. Plant cellulose synthase subfamily. Mn(2+) serves as cofactor. Zn(2+) is required as a cofactor.

Its subcellular location is the cell membrane. The catalysed reaction is [(1-&gt;4)-beta-D-glucosyl](n) + UDP-alpha-D-glucose = [(1-&gt;4)-beta-D-glucosyl](n+1) + UDP + H(+). It participates in glycan metabolism; plant cellulose biosynthesis. Probable catalytic subunit of cellulose synthase terminal complexes ('rosettes'), required for beta-1,4-glucan microfibril crystallization, a major mechanism of the cell wall formation. In Oryza sativa subsp. japonica (Rice), this protein is Probable cellulose synthase A catalytic subunit 8 [UDP-forming] (CESA8).